The primary structure comprises 435 residues: Cytidine monophosphate-N-acetylneuraminic acid hydroxylase (435 aa).

Belongs to the CMP-Neu5Ac hydroxylase family. [2Fe-2S] cluster serves as cofactor.

It localises to the cytoplasm. It catalyses the reaction CMP-N-acetyl-beta-neuraminate + 2 Fe(II)-[cytochrome b5] + O2 + 2 H(+) = CMP-N-glycoloyl-beta-neuraminate + 2 Fe(III)-[cytochrome b5] + H2O. Its pathway is amino-sugar metabolism; N-acetylneuraminate metabolism. Its function is as follows. Sialic acids are components of carbohydrate chains of glycoconjugates and are involved in cell-cell recognition and cell-pathogen interactions. Catalyzes the conversion of CMP-N-acetylneuraminic acid (CMP-Neu5Ac) into its hydroxylated derivative CMP-N-glycolylneuraminic acid (CMP-Neu5Gc), a sialic acid abundantly expressed at the surface of many cells. The sequence is that of Cytidine monophosphate-N-acetylneuraminic acid hydroxylase from Sus scrofa (Pig).